We begin with the raw amino-acid sequence, 107 residues long: Integration host factor subunit beta (107 aa).

A compositionally biased stretch (basic and acidic residues) spans 82 to 101 (PGKELRERVDRRAGEPLKAE). Residues 82 to 107 (PGKELRERVDRRAGEPLKAEDPDDDL) are disordered.

This sequence belongs to the bacterial histone-like protein family. As to quaternary structure, heterodimer of an alpha and a beta chain.

Its function is as follows. This protein is one of the two subunits of integration host factor, a specific DNA-binding protein that functions in genetic recombination as well as in transcriptional and translational control. This Paraburkholderia xenovorans (strain LB400) protein is Integration host factor subunit beta.